The chain runs to 754 residues: 5-methyltetrahydropteroyltriglutamate--homocysteine methyltransferase (754 aa).

5-methyltetrahydropteroyltri-L-glutamate contacts are provided by residues 17 to 20 (RELK) and K117. L-homocysteine-binding positions include 431–433 (IGS) and E484. L-methionine contacts are provided by residues 431-433 (IGS) and E484. 5-methyltetrahydropteroyltri-L-glutamate-binding positions include 515 to 516 (RC) and W561. D599 is an L-homocysteine binding site. An L-methionine-binding site is contributed by D599. E605 serves as a coordination point for 5-methyltetrahydropteroyltri-L-glutamate. Zn(2+) contacts are provided by H641, C643, and E665. H694 serves as the catalytic Proton donor. Position 726 (C726) interacts with Zn(2+).

This sequence belongs to the vitamin-B12 independent methionine synthase family. Zn(2+) serves as cofactor.

The catalysed reaction is 5-methyltetrahydropteroyltri-L-glutamate + L-homocysteine = tetrahydropteroyltri-L-glutamate + L-methionine. The protein operates within amino-acid biosynthesis; L-methionine biosynthesis via de novo pathway; L-methionine from L-homocysteine (MetE route): step 1/1. Functionally, catalyzes the transfer of a methyl group from 5-methyltetrahydrofolate to homocysteine resulting in methionine formation. This chain is 5-methyltetrahydropteroyltriglutamate--homocysteine methyltransferase, found in Salmonella arizonae (strain ATCC BAA-731 / CDC346-86 / RSK2980).